Here is a 391-residue protein sequence, read N- to C-terminus: Extracellular metalloproteinase 3 (391 aa).

Positions 1–9 (HNVVDYVAS) are excised as a propeptide. Asparagine 173 is a glycosylation site (N-linked (GlcNAc...) asparagine). Histidine 192 is a Zn(2+) binding site. Glutamate 193 is a catalytic residue. Residue histidine 196 participates in Zn(2+) binding. 2 N-linked (GlcNAc...) asparagine glycosylation sites follow: asparagine 243 and asparagine 385.

Belongs to the peptidase M36 family. The cofactor is Zn(2+).

It localises to the secreted. Functionally, secreted metalloproteinase probably acting as a virulence factor. In Trichophyton soudanense, this protein is Extracellular metalloproteinase 3 (MEP3).